A 626-amino-acid polypeptide reads, in one-letter code: MSKVIGIDLGTTNSCVSIYERGESKVIPNKEGKNTTPSVVAFTDKGEILVGDTAKRQAVTNPEKTIFSIKRIMGLMMNEKNAKEAKNRLPYHIVDRNGACAVEIAGKTYTPQEISAKVLMKLKEDAEAFLGESVVDAVITVPAYFNDSQRKATKEAGTIAGLNVLRIINEPTAAALAYGLDKKEAEKIVVYDLGGGTFDVTVLETGDSVVEVLATGGNAFLGGDDFDNRLIDFLVSEFKSETGIDLKNDVMALQRLKEAAENAKKELSSAMETTINLPFITADATGPKHLTKTLSRAKFEGMIDDLVGETITKINEVVKDAGISKGDIKEVVMVGGSTRVPLVQEEVKKAFSKELNKSVNPDEVVAIGAAIQGAVIKGDVKDVLLLDVTPLSLGIETLGGVMSKLIEKGTTIPTKKSQTFSTAEDNQSAVTINVLQGEREFAKDNKSLGNFNLEGIMPAPRGVPQIEVTFDIDANGILTVSAKDKASGKAQNITISGSSGLSEEEINKMVNDAEAHKEDDKKRKEAVEARNAADSLAHQTEKSLSEMGEKIPAEDRAKIEAALNDLKEVLKDESASKEQIDVKVKALSEVSHKLAEAMYKDQNAGAADGGAEKKKKDDDVIDAEVE.

Position 197 is a phosphothreonine; by autocatalysis (threonine 197). Composition is skewed to basic and acidic residues over residues 512–528 (DAEA…EAVE) and 539–551 (QTEK…GEKI). 2 disordered regions span residues 512–551 (DAEA…GEKI) and 601–626 (DQNA…AEVE).

This sequence belongs to the heat shock protein 70 family.

In terms of biological role, acts as a chaperone. This is Chaperone protein DnaK from Campylobacter fetus subsp. fetus (strain 82-40).